We begin with the raw amino-acid sequence, 410 residues long: Chaperone protein dnaJ 15 (410 aa).

The region spanning 17-82 (DPYEVLCVSK…EKRRHYDNAG (66 aa)) is the J domain. Positions 284 to 344 (AKTYEDTTEK…TVDELLKQRD (61 aa)) form a coiled coil. The tract at residues 351 to 410 (SVVKTPSGNNLSNGSSSKAQGDESKGDGDSAGEEGGTENRDKSKRKWFNLNLKGSDKKLG) is disordered. Residues 357–367 (SGNNLSNGSSS) are compositionally biased toward low complexity.

This sequence belongs to the DnaJ family. B/II subfamily. In terms of tissue distribution, expressed at high levels in root cap, root tip meristematic region and elongation zones, and at lower levels in mature part of roots (at protein level). Constitutively expressed in seedlings, etiolated or not, roots, rosette leaves, cauline leaves, stems, flowers, siliques and pollen.

The protein localises to the cytoplasm. Its subcellular location is the cytoskeleton. The protein resides in the endoplasmic reticulum membrane. It localises to the golgi apparatus membrane. Plays a continuous role in plant development probably in the structural organization of compartments. Seems to be involved in early gravitropic signal transduction within the gravity-perceiving cells (statocytes), where it influences pH changes and auxin distribution. Probably affects the localization and/or activity of auxin efflux carrier components (PIN proteins) or other proteins involved in lateral auxin transport. This chain is Chaperone protein dnaJ 15 (ATJ15), found in Arabidopsis thaliana (Mouse-ear cress).